Consider the following 338-residue polypeptide: Probable G-protein coupled receptor 160 (338 aa).

At 1 to 23 the chain is on the extracellular side; that stretch reads MTALSSENCSFQYQLRQTNQPLD. Asn-8 carries an N-linked (GlcNAc...) asparagine glycan. The helical transmembrane segment at 24–44 threads the bilayer; sequence VNYLLFLIILGKILLNILTLG. The Cytoplasmic portion of the chain corresponds to 45–58; that stretch reads MRRKNTCQNFMEYF. Residues 59 to 79 form a helical membrane-spanning segment; sequence CISLAFVDLLLLVNISIILYF. At 80–93 the chain is on the extracellular side; it reads RDFVLLSIRFTKYH. Residues 94-114 form a helical membrane-spanning segment; that stretch reads ICLFTQIISFTYGFLHYPVFL. Residues 115-136 are Cytoplasmic-facing; it reads TACIDYCLNFSKTTKLSFKCQK. The helical transmembrane segment at 137–157 threads the bilayer; that stretch reads LFYFFTVILIWISVLAYVLGD. Over 158–177 the chain is Extracellular; the sequence is PAIYQSLKAQNAYSRHCPFY. A helical membrane pass occupies residues 178–198; that stretch reads VSIQSYWLSFFMVMILFVAFI. The Cytoplasmic portion of the chain corresponds to 199 to 244; sequence TCWEEVTTLVQAIRITSYMNETILYFPFSSHSSYTVRSKKIFLSKL. Residues 245–265 form a helical membrane-spanning segment; that stretch reads IVCFLSTWLPFVLLQVIIVLL. The Extracellular segment spans residues 266–268; the sequence is KVQ. Residues 269–289 form a helical membrane-spanning segment; sequence IPAYIEMNIPWLYFVNSFLIA. At 290–338 the chain is on the cytoplasmic side; that stretch reads TVYWFNCHKLNLKDIGLPLDPFVNWKCCFIPLTIPNLEQIEKPISIMIC.

This sequence belongs to the G-protein coupled receptor 1 family.

It is found in the cell membrane. In terms of biological role, orphan receptor. In Homo sapiens (Human), this protein is Probable G-protein coupled receptor 160 (GPR160).